A 499-amino-acid polypeptide reads, in one-letter code: Ammonium transporter MEP2 (499 aa).

At 1-31 the chain is on the extracellular side; that stretch reads MSYNFTGTPTGEGTGGNSLTTDLNTQFDLAN. Residue asparagine 4 is glycosylated (N-linked (GlcNAc...) asparagine). Residues 32–52 form a helical membrane-spanning segment; that stretch reads MGWIGVASAGVWIMVPGIGLL. At 53–62 the chain is on the cytoplasmic side; the sequence is YSGLSRKKHA. Residues 63 to 83 form a helical membrane-spanning segment; the sequence is LSLLWASMMASAVCIFQWFFW. Over 84 to 122 the chain is Extracellular; sequence GYSLAFSHNTRGNGFIGTLEFFGFRNVLGAPSSVSSLPD. The helical transmembrane segment at 123–143 threads the bilayer; that stretch reads ILFAVYQGMFAAVTGALMLGG. Over 144–152 the chain is Cytoplasmic; sequence ACERARLFP. The chain crosses the membrane as a helical span at residues 153–173; it reads MMVFLFLWMTIVYCPIACWVW. The Extracellular portion of the chain corresponds to 174–187; sequence NAEGWLVKLGSLDY. The chain crosses the membrane as a helical span at residues 188–208; the sequence is AGGLCVHLTSGHGGLVYALIL. Residues 209–230 are Cytoplasmic-facing; the sequence is GKRNDPVTRKGMPKYKPHSVTS. Residues 231–251 traverse the membrane as a helical segment; that stretch reads VVLGTVFLWFGWMFFNGGSAG. The Extracellular portion of the chain corresponds to 252-257; that stretch reads NATIRA. A helical membrane pass occupies residues 258-278; that stretch reads WYSIMSTNLAAACGGLTWMVI. The Cytoplasmic portion of the chain corresponds to 279-289; sequence DYFRCGRKWTT. A helical membrane pass occupies residues 290-312; sequence VGLCSGIIAGLVGITPAAGFVPI. Residues 313–315 lie on the Extracellular side of the membrane; the sequence is WSA. Residues 316 to 338 form a helical membrane-spanning segment; the sequence is VVIGVVTGAGCNLAVDLKSLLRI. Topologically, residues 339-346 are cytoplasmic; sequence DDGLDCYS. A helical membrane pass occupies residues 347 to 367; sequence IHGVGGCIGSVLTGIFAADYV. The Extracellular segment spans residues 368–393; the sequence is NATAGSYISPIDGGWINHHYKQVGYQ. A helical transmembrane segment spans residues 394–414; the sequence is LAGICAALAWTVTVTSILLLT. Over 415–499 the chain is Cytoplasmic; it reads MNAIPFLKLR…SSTKNTDHIV (85 aa). An enhancer domain region spans residues 428–441; that stretch reads DEEELGTDAAQIGE. A linker domain region spans residues 442-449; that stretch reads FTYEESTA. An autoinhibitory domain region spans residues 450–485; that stretch reads YIPEPIRSKTSAQMPPPHENIDDKIVGNTDAEKNST. Residues 455 to 499 are disordered; it reads IRSKTSAQMPPPHENIDDKIVGNTDAEKNSTPSDASSTKNTDHIV. Position 457 is a phosphoserine (serine 457). Residues 468–482 are compositionally biased toward basic and acidic residues; sequence ENIDDKIVGNTDAEK. The segment covering 483–493 has biased composition (polar residues); that stretch reads NSTPSDASSTK.

This sequence belongs to the ammonia transporter channel (TC 1.A.11.2) family. Phosphorylated at Ser-457 by the TORC1 effector kinase NPR1 under nitrogen-limiting conditions which causes a conformational change in the C-terminal region (CTR) to form an open active conformation. Supplementation of nitrogen source leads to inactivation and instant Ser-457 dephosphorylation via plasma membrane PSR1 and PSR2 redundant phosphatases. Post-translationally, the residue Asn-4 of the protein's N-terminal tail is the only site that is glycosylated.

The protein resides in the cell membrane. Functionally, transporter for ammonium (both charged and uncharged NH3 and NH4) to use as a nitrogen source. The affinity of MEP2 is about twenty times higher than that of MEP1. MEP3 has the lowest affinity. Under ammonium limitation acts as an ammonium sensor, generating a signal that leads to pseudohyphal (filamentous) growth. The chain is Ammonium transporter MEP2 from Saccharomyces cerevisiae (strain ATCC 204508 / S288c) (Baker's yeast).